We begin with the raw amino-acid sequence, 217 residues long: Large ribosomal subunit protein uL3 (217 aa).

The segment covering 134-146 (GRATHGNSRSHNV) has biased composition (polar residues). Residues 134–154 (GRATHGNSRSHNVPGSIGMAQ) form a disordered region. N5-methylglutamine is present on Gln-154.

This sequence belongs to the universal ribosomal protein uL3 family. As to quaternary structure, part of the 50S ribosomal subunit. Forms a cluster with proteins L14 and L19. Post-translationally, methylated by PrmB.

Functionally, one of the primary rRNA binding proteins, it binds directly near the 3'-end of the 23S rRNA, where it nucleates assembly of the 50S subunit. The protein is Large ribosomal subunit protein uL3 of Burkholderia lata (strain ATCC 17760 / DSM 23089 / LMG 22485 / NCIMB 9086 / R18194 / 383).